The following is a 596-amino-acid chain: Chaperone protein DnaK (596 aa).

Residue threonine 174 is modified to Phosphothreonine; by autocatalysis. The segment at alanine 576–glutamate 596 is disordered.

This sequence belongs to the heat shock protein 70 family.

Functionally, acts as a chaperone. This is Chaperone protein DnaK from Mycoplasmopsis synoviae (strain 53) (Mycoplasma synoviae).